The sequence spans 699 residues: LMBR1 domain-containing protein 2 homolog (699 aa).

Residues M1–Y3 lie on the Extracellular side of the membrane. Residues L4–I26 form a helical membrane-spanning segment. Topologically, residues P27–H30 are cytoplasmic. Residues I31–I51 traverse the membrane as a helical segment. Topologically, residues P52 to R106 are extracellular. An N-linked (GlcNAc...) asparagine glycan is attached at N76. Residues I107–L127 form a helical membrane-spanning segment. At K128–E144 the chain is on the cytoplasmic side. A helical membrane pass occupies residues N145 to V165. Residues K166–S181 are Extracellular-facing. The chain crosses the membrane as a helical span at residues A182–V202. The Cytoplasmic segment spans residues P203–K381. The chain crosses the membrane as a helical span at residues T382–F402. Residues S403–T426 are Extracellular-facing. The helical transmembrane segment at I427–L447 threads the bilayer. The Cytoplasmic portion of the chain corresponds to R448 to S467. A helical membrane pass occupies residues L468–G488. The Extracellular portion of the chain corresponds to L489–D514. A helical membrane pass occupies residues V515 to C535. Residues L536 to V699 lie on the Cytoplasmic side of the membrane. Residues E564–D592 adopt a coiled-coil conformation. Positions F669–V699 are disordered.

This sequence belongs to the LIMR family.

The protein resides in the membrane. The protein is LMBR1 domain-containing protein 2 homolog of Drosophila pseudoobscura pseudoobscura (Fruit fly).